Here is a 354-residue protein sequence, read N- to C-terminus: Probable tartrate dehydrogenase/decarboxylase (354 aa).

Asp-221, Asp-245, and Asp-249 together coordinate Mn(2+).

Belongs to the isocitrate and isopropylmalate dehydrogenases family. Mg(2+) serves as cofactor. It depends on Mn(2+) as a cofactor. K(+) is required as a cofactor.

The catalysed reaction is tartrate + NAD(+) = 2-hydroxy-3-oxosuccinate + NADH + H(+). It catalyses the reaction (2R,3S)-tartrate + NAD(+) = 2-hydroxy-3-oxosuccinate + NADH + H(+). The enzyme catalyses (2R,3R)-tartrate + NAD(+) = 2-hydroxy-3-oxosuccinate + NADH + H(+). It carries out the reaction (2R,3R)-tartrate + H(+) = (R)-glycerate + CO2. The catalysed reaction is (R)-malate + NAD(+) = pyruvate + CO2 + NADH. Has multiple catalytic activities. Apart from catalyzing the oxidation of (+)-tartrate to oxaloglycolate, also converts meso-tartrate to D-glycerate and catalyzes the oxidative decarboxylation of D-malate to pyruvate. This chain is Probable tartrate dehydrogenase/decarboxylase (ycsA), found in Bacillus subtilis (strain 168).